The following is a 314-amino-acid chain: Olfactory receptor 52B4 (314 aa).

Over 1–27 (MPTVNHSGTSHTVFHLLGIPGLQDQHM) the chain is Extracellular. An N-linked (GlcNAc...) asparagine glycan is attached at asparagine 5. The helical transmembrane segment at 28 to 48 (WISIPFFISYVTALLGNSLLI) threads the bilayer. Over 49 to 56 (FIILTKRS) the chain is Cytoplasmic. The chain crosses the membrane as a helical span at residues 57–77 (LHEPMYLFLCMLAGADIVLST). At 78 to 101 (CTIPQALAIFWFRAGDISLDRCIT) the chain is on the extracellular side. An intrachain disulfide couples cysteine 99 to cysteine 191. Residues 102 to 122 (QLFFIHSTFISESGILLVMAF) form a helical membrane-spanning segment. At 123–141 (DHYIAICYPLRYTTILTNA) the chain is on the cytoplasmic side. A helical transmembrane segment spans residues 142 to 162 (LIKKICVTVSLRSYGTIFPII). Over 163-198 (FLLKRLTFCQNNIIPHTFCEHIGLAKYACNDIRINI) the chain is Extracellular. A helical membrane pass occupies residues 199–219 (WYGFSILMSTVVLDVVLIFIS). At 220–239 (YMLILHAVFHMPSPDACHKA) the chain is on the cytoplasmic side. A helical membrane pass occupies residues 240-260 (LNTFGSHVCIIILFYGSGIFT). Residues 261 to 275 (ILTQRFGRHIPPCIH) lie on the Extracellular side of the membrane. The helical transmembrane segment at 276-296 (IPLANVCILAPPMLNPIIYGI) threads the bilayer. Residues 297–314 (KTKQIQEQVVQFLFIKQK) lie on the Cytoplasmic side of the membrane.

It belongs to the G-protein coupled receptor 1 family.

It localises to the cell membrane. Its function is as follows. Odorant receptor. This Homo sapiens (Human) protein is Olfactory receptor 52B4 (OR52B4).